Here is an 80-residue protein sequence, read N- to C-terminus: Exodeoxyribonuclease 7 small subunit (80 aa).

Belongs to the XseB family. In terms of assembly, heterooligomer composed of large and small subunits.

Its subcellular location is the cytoplasm. The catalysed reaction is Exonucleolytic cleavage in either 5'- to 3'- or 3'- to 5'-direction to yield nucleoside 5'-phosphates.. In terms of biological role, bidirectionally degrades single-stranded DNA into large acid-insoluble oligonucleotides, which are then degraded further into small acid-soluble oligonucleotides. The protein is Exodeoxyribonuclease 7 small subunit of Shigella sonnei (strain Ss046).